Consider the following 492-residue polypeptide: Fibroblast growth factor receptor substrate 3 (492 aa).

The N-myristoyl glycine moiety is linked to residue Gly2. One can recognise an IRS-type PTB domain in the interval 13–115; the sequence is VPDNHPTKFK…QCNSINVMEE (103 aa). Disordered stretches follow at residues 153–173, 338–455, and 467–492; these read GEGP…RHPS, QLGG…SDSY, and SNLQ…DLPL.

In terms of assembly, binds NTRK1. Binds FGFR1, NGFR, GRB2, PTPN11 and ERK2. In terms of processing, phosphorylated by ULK2 in vitro. Phosphorylated on tyrosine residues upon stimulation by BFGF or NGFB.

Its subcellular location is the membrane. Functionally, adapter protein that links FGF and NGF receptors to downstream signaling pathways. Involved in the activation of MAP kinases. Down-regulates ERK2 signaling by interfering with the phosphorylation and nuclear translocation of ERK2. This is Fibroblast growth factor receptor substrate 3 (FRS3) from Homo sapiens (Human).